Consider the following 205-residue polypeptide: uncharacterized protein (205 aa).

The HTH tetR-type domain occupies 11 to 71; it reads DKRQAEILEA…RIIETGLDEG (61 aa). Positions 34-53 form a DNA-binding region, H-T-H motif; that stretch reads TMKDVVEESGFSRGGVYLYF.

This is an uncharacterized protein from Bacillus subtilis (strain 168).